Reading from the N-terminus, the 297-residue chain is Tyrosine recombinase XerC (297 aa).

The 84-residue stretch at 1–84 (MEEIQVTFLN…TLRTFYEFWM (84 aa)) folds into the Core-binding (CB) domain. The Tyr recombinase domain occupies 105-286 (YLPQFFYEEE…SNQQLRKVYL (182 aa)). Catalysis depends on residues Arg-145, Lys-169, His-238, Arg-241, and His-264. Catalysis depends on Tyr-273, which acts as the O-(3'-phospho-DNA)-tyrosine intermediate.

Belongs to the 'phage' integrase family. XerC subfamily. Forms a cyclic heterotetrameric complex composed of two molecules of XerC and two molecules of XerD.

The protein localises to the cytoplasm. Functionally, site-specific tyrosine recombinase, which acts by catalyzing the cutting and rejoining of the recombining DNA molecules. The XerC-XerD complex is essential to convert dimers of the bacterial chromosome into monomers to permit their segregation at cell division. It also contributes to the segregational stability of plasmids. This is Tyrosine recombinase XerC from Staphylococcus haemolyticus (strain JCSC1435).